We begin with the raw amino-acid sequence, 151 residues long: Aspartate carbamoyltransferase regulatory chain (151 aa).

Zn(2+) is bound by residues Cys-108, Cys-113, Cys-138, and Cys-141.

It belongs to the PyrI family. In terms of assembly, contains catalytic and regulatory chains. Requires Zn(2+) as cofactor.

Its function is as follows. Involved in allosteric regulation of aspartate carbamoyltransferase. This is Aspartate carbamoyltransferase regulatory chain from Pyrobaculum neutrophilum (strain DSM 2338 / JCM 9278 / NBRC 100436 / V24Sta) (Thermoproteus neutrophilus).